A 298-amino-acid chain; its full sequence is GPN-loop GTPase QQT1 (298 aa).

Glycine 12–threonine 17 contacts GTP. Positions glycine 69 to asparagine 71 match the Gly-Pro-Asn (GPN)-loop; involved in dimer interface motif. Serine 173 to aspartate 176 is a binding site for GTP.

The protein belongs to the GPN-loop GTPase family. In terms of assembly, heterodimer with QQT2. In terms of tissue distribution, expressed in vascular tissues, root tips, apical and root meristematic regions, and floral primordia.

It localises to the cytoplasm. The protein resides in the nucleus. The protein localises to the cytoskeleton. Its subcellular location is the spindle. It is found in the phragmoplast. In terms of biological role, small GTPase that is essential for the correct formation of the tangential divisions in early embryos. Associates with microtubule during mitosis and may function in the positioning of the division plane. May participate in the patterning of the early embryo at the octant-dermatogen transition. Is crucial for normal development of the plant. The polypeptide is GPN-loop GTPase QQT1 (Arabidopsis thaliana (Mouse-ear cress)).